We begin with the raw amino-acid sequence, 367 residues long: Chorismate synthase (367 aa).

Residues 39–60 (EEFSHDLQRRASGKSRHTSARR) form a disordered region. 2 residues coordinate NADP(+): Arg-48 and Arg-54. FMN contacts are provided by residues 125–127 (RSS), 238–239 (NA), Gly-278, 293–297 (KPTSS), and Arg-319.

Belongs to the chorismate synthase family. In terms of assembly, homotetramer. Requires FMNH2 as cofactor.

The enzyme catalyses 5-O-(1-carboxyvinyl)-3-phosphoshikimate = chorismate + phosphate. Its pathway is metabolic intermediate biosynthesis; chorismate biosynthesis; chorismate from D-erythrose 4-phosphate and phosphoenolpyruvate: step 7/7. Catalyzes the anti-1,4-elimination of the C-3 phosphate and the C-6 proR hydrogen from 5-enolpyruvylshikimate-3-phosphate (EPSP) to yield chorismate, which is the branch point compound that serves as the starting substrate for the three terminal pathways of aromatic amino acid biosynthesis. This reaction introduces a second double bond into the aromatic ring system. The chain is Chorismate synthase from Xanthomonas oryzae pv. oryzae (strain MAFF 311018).